The primary structure comprises 269 residues: Shikimate dehydrogenase (NADP(+)) (269 aa).

Shikimate is bound by residues 14–16 (SVS) and threonine 61. Lysine 65 (proton acceptor) is an active-site residue. Residues asparagine 85 and aspartate 98 each contribute to the shikimate site. Residues 120–124 (GAGGA), 143–148 (NRTEEK), and threonine 211 each bind NADP(+). Tyrosine 213 is a binding site for shikimate. An NADP(+)-binding site is contributed by glycine 234.

The protein belongs to the shikimate dehydrogenase family. In terms of assembly, homodimer.

The enzyme catalyses shikimate + NADP(+) = 3-dehydroshikimate + NADPH + H(+). It functions in the pathway metabolic intermediate biosynthesis; chorismate biosynthesis; chorismate from D-erythrose 4-phosphate and phosphoenolpyruvate: step 4/7. In terms of biological role, involved in the biosynthesis of the chorismate, which leads to the biosynthesis of aromatic amino acids. Catalyzes the reversible NADPH linked reduction of 3-dehydroshikimate (DHSA) to yield shikimate (SA). The chain is Shikimate dehydrogenase (NADP(+)) from Archaeoglobus fulgidus (strain ATCC 49558 / DSM 4304 / JCM 9628 / NBRC 100126 / VC-16).